Here is a 267-residue protein sequence, read N- to C-terminus: 2-keto-3-deoxy-L-rhamnonate aldolase (267 aa).

H49 functions as the Proton acceptor in the catalytic mechanism. Residue Q151 coordinates substrate. Residue E153 coordinates Mg(2+). Substrate-binding residues include A178 and D179. D179 is a binding site for Mg(2+).

Belongs to the HpcH/HpaI aldolase family. KDR aldolase subfamily. Homohexamer. The cofactor is Mg(2+).

The catalysed reaction is 2-dehydro-3-deoxy-L-rhamnonate = (S)-lactaldehyde + pyruvate. Its function is as follows. Catalyzes the reversible retro-aldol cleavage of 2-keto-3-deoxy-L-rhamnonate (KDR) to pyruvate and lactaldehyde. This is 2-keto-3-deoxy-L-rhamnonate aldolase from Escherichia coli O17:K52:H18 (strain UMN026 / ExPEC).